A 236-amino-acid polypeptide reads, in one-letter code: 4-aminobenzoate synthase (236 aa).

Glutamate 87, histidine 94, glutamate 148, histidine 180, aspartate 184, and histidine 187 together coordinate Fe(2+).

This sequence belongs to the CADD family. As to quaternary structure, homodimer. It depends on Fe(2+) as a cofactor. Mn(2+) is required as a cofactor.

Involved in de novo para-aminobenzoate (PABA) biosynthesis. Acts as a self-sacrificing or 'suicide' enzyme that utilizes its own active site tyrosine residue(s) as the substrate for PABA synthesis. The side chain of the tyrosine residue is released from the protein backbone via cleavage of the C(alpha)-C(beta) bond, leaving a glycine in place of the original tyrosine residue. Reaction requires O(2) and a reduced dimetal cofactor. This is 4-aminobenzoate synthase from Chlamydia muridarum (strain MoPn / Nigg).